A 157-amino-acid chain; its full sequence is Probable chemoreceptor glutamine deamidase CheD (157 aa).

Belongs to the CheD family.

It catalyses the reaction L-glutaminyl-[protein] + H2O = L-glutamyl-[protein] + NH4(+). Probably deamidates glutamine residues to glutamate on methyl-accepting chemotaxis receptors (MCPs), playing an important role in chemotaxis. In Archaeoglobus fulgidus (strain ATCC 49558 / DSM 4304 / JCM 9628 / NBRC 100126 / VC-16), this protein is Probable chemoreceptor glutamine deamidase CheD.